Here is a 324-residue protein sequence, read N- to C-terminus: HTH-type transcriptional regulator GlxA (324 aa).

Residues 223–321 (LAVLEKMETA…SQTPGSLRRR (99 aa)) form the HTH araC/xylS-type domain. 2 DNA-binding regions (H-T-H motif) span residues 240 to 261 (TAMARLAGVSPRHLDRLFREHR) and 288 to 311 (IPEIAYATGFSSPAHFSNAFKRLF).

In Rhizobium meliloti (strain 1021) (Ensifer meliloti), this protein is HTH-type transcriptional regulator GlxA (glxA).